The following is a 391-amino-acid chain: Deoxyguanosinetriphosphate triphosphohydrolase-like protein (391 aa).

Residues 62–198 (RLTHSLEVST…ASLADDISYI (137 aa)) form the HD domain.

Belongs to the dGTPase family. Type 2 subfamily.

The protein is Deoxyguanosinetriphosphate triphosphohydrolase-like protein of Rickettsia akari (strain Hartford).